Reading from the N-terminus, the 251-residue chain is MSDYVYELMKQHHSVRKFKNQPLGSETVEKLVEAGQSASTSSYLQTYSIIGVEDPSIKARLKEVSGQPYVLDNGYLFVFVLDYYRHHLVDEVAASNMETSYGSAEGLLVGTIDVALVAQNMAVAAEDMGYGIVYLGSLRNDVARVREILNLPDYTFPLFGMAVGEPSDEENGSPKPRLPFKHIFHKDQYDANQHQQRKELEAYDQVVSEYYKERTHGVRTENWSQQIETFLGRKTRLDMLDELKKAGFIQR.

This sequence belongs to the flavin oxidoreductase frp family. The cofactor is FMN.

Functionally, reduces FMN, organic nitro compounds and disulfide DTNB. Involved in maintenance of the cellular redox state and the disulfide stress response. The chain is NADPH-dependent oxidoreductase (nfrA) from Staphylococcus epidermidis (strain ATCC 35984 / DSM 28319 / BCRC 17069 / CCUG 31568 / BM 3577 / RP62A).